A 212-amino-acid polypeptide reads, in one-letter code: Nucleoredoxin-like protein 1 (212 aa).

The region spanning 1-164 (MASLFSGRIL…AAEVLDRNFQ (164 aa)) is the Thioredoxin domain. A disordered region spans residues 191-212 (AARGGRDPGGGGGEEGGAGGLF). Residues 197–212 (DPGGGGGEEGGAGGLF) are compositionally biased toward gly residues.

This sequence belongs to the nucleoredoxin family. In terms of assembly, interacts with isoform 1 of BSG.

Its subcellular location is the cell projection. The protein resides in the cilium. It is found in the photoreceptor outer segment. In terms of biological role, plays an important role in retinal cone photoreceptor survival. In association with glucose transporter SLC16A1/GLUT1 and BSG, promotes retinal cone survival by enhancing aerobic glycolysis and accelerating the entry of glucose into photoreceptors. May play a role in cone cell viability, slowing down cone degeneration, does not seem to play a role in degenerating rods. This Homo sapiens (Human) protein is Nucleoredoxin-like protein 1 (NXNL1).